The sequence spans 90 residues: Carboxysome shell vertex protein CsoS4A (90 aa).

One can recognise a BMV domain in the interval 1–78; the sequence is MKIYKVDKTL…SDLTIVGIID (78 aa).

Belongs to the CcmL/EutN family. CsoS4 subfamily. Homopentamer.

The protein resides in the carboxysome. In terms of biological role, probably forms vertices in the carboxysome, a polyhedral inclusion where RuBisCO (ribulose bisphosphate carboxylase, cbbL-cbbS) is sequestered. Has been modeled to induce curvature upon insertion into an otherwise flat hexagonal layer of major carboxysome subunits. The sequence is that of Carboxysome shell vertex protein CsoS4A from Hydrogenovibrio crunogenus (strain DSM 25203 / XCL-2) (Thiomicrospira crunogena).